The following is a 361-amino-acid chain: Chorismate synthase (361 aa).

Positions 48 and 54 each coordinate NADP(+). FMN-binding positions include 125–127, 238–239, G278, 293–297, and R319; these read RSS, NA, and KPTSS.

It belongs to the chorismate synthase family. As to quaternary structure, homotetramer. It depends on FMNH2 as a cofactor.

The catalysed reaction is 5-O-(1-carboxyvinyl)-3-phosphoshikimate = chorismate + phosphate. Its pathway is metabolic intermediate biosynthesis; chorismate biosynthesis; chorismate from D-erythrose 4-phosphate and phosphoenolpyruvate: step 7/7. Catalyzes the anti-1,4-elimination of the C-3 phosphate and the C-6 proR hydrogen from 5-enolpyruvylshikimate-3-phosphate (EPSP) to yield chorismate, which is the branch point compound that serves as the starting substrate for the three terminal pathways of aromatic amino acid biosynthesis. This reaction introduces a second double bond into the aromatic ring system. The chain is Chorismate synthase from Proteus mirabilis (strain HI4320).